The sequence spans 139 residues: MAMSFSGAVLTGMASSFHSGAKQSSFGAVRVGQKTQFVVVSQRKKSLIYAAKGDGNILDDLNEATKKASDFVTDKTKEALADGEKAKDYVVEKNSETADTLGKEAEKAAAYVEEKGKEAANKAAEFAEGKAGEAKDATK.

A chloroplast-targeting transit peptide spans 1 to 40 (MAMSFSGAVLTGMASSFHSGAKQSSFGAVRVGQKTQFVVV).

This sequence belongs to the COR15 protein family. In terms of assembly, forms homooligomers which interact with potential stromal substrates in the stroma of chloroplasts. Interacts with the galactose headgroup of the chloroplast lipid monogalactosyldiacylglycerol (MGDG).

Its subcellular location is the plastid. The protein localises to the chloroplast stroma. In terms of biological role, exhibits cryoprotective activity toward stromal substrates (e.g. LDH and rubisco) in chloroplasts and in protoplasts and confers freezing tolerance to plants in a CBF-dependent manner. Protectant against various stresses (e.g. cold, drought and heat stress) by preventing protein aggregation (e.g. LDH) and attenuating enzyme inactivation. Influences the intrinsic curvature of the inner membrane of the chloroplast envelope, and modulates the freeze-induced lamellar-to-hexagonal II phase transitions that occur in regions where the plasma membrane is brought into close apposition with the chloroplast envelope during freeze-induced osmotic contraction. Mediates a shift in the melting curves of phospholipids-containing membranes to lower temperatures. Involved in the regulation of leaf senescence by abscisic acid (ABA) in a VNI2-dependent manner. The polypeptide is Protein COLD-REGULATED 15A, chloroplastic (Arabidopsis thaliana (Mouse-ear cress)).